The primary structure comprises 406 residues: Acetate kinase (406 aa).

Asparagine 10 serves as a coordination point for Mg(2+). Lysine 17 lines the ATP pocket. Arginine 92 contacts substrate. Aspartate 151 acts as the Proton donor/acceptor in catalysis. Residues 211-215 (HLGSG), 286-288 (DFR), and 335-339 (GIGEN) each bind ATP. Mg(2+) is bound at residue glutamate 389.

Belongs to the acetokinase family. Homodimer. Requires Mg(2+) as cofactor. Mn(2+) serves as cofactor.

It is found in the cytoplasm. It catalyses the reaction acetate + ATP = acetyl phosphate + ADP. It functions in the pathway metabolic intermediate biosynthesis; acetyl-CoA biosynthesis; acetyl-CoA from acetate: step 1/2. Functionally, catalyzes the formation of acetyl phosphate from acetate and ATP. Can also catalyze the reverse reaction. The protein is Acetate kinase of Buchnera aphidicola subsp. Cinara cedri (strain Cc).